Consider the following 494-residue polypeptide: Ubiquitin carboxyl-terminal hydrolase 27 (494 aa).

The helical transmembrane segment at 30–50 threads the bilayer; the sequence is LSFAGLLGVAGFVFAQQHGLF. The 421-residue stretch at 74–494 folds into the USP domain; the sequence is PGLQNLGNNC…EASLLFYERL (421 aa). Residue cysteine 83 is the Nucleophile of the active site. The active-site Proton acceptor is the histidine 440.

It belongs to the peptidase C19 family.

The protein localises to the membrane. The catalysed reaction is Thiol-dependent hydrolysis of ester, thioester, amide, peptide and isopeptide bonds formed by the C-terminal Gly of ubiquitin (a 76-residue protein attached to proteins as an intracellular targeting signal).. In terms of biological role, recognizes and hydrolyzes the peptide bond at the C-terminal Gly of ubiquitin. Involved in the processing of poly-ubiquitin precursors as well as that of ubiquitinated proteins. The polypeptide is Ubiquitin carboxyl-terminal hydrolase 27 (UBP27) (Arabidopsis thaliana (Mouse-ear cress)).